Reading from the N-terminus, the 360-residue chain is Photosystem II protein D1 (360 aa).

Helical transmembrane passes span 29 to 46 (YIGW…TATS), 118 to 133 (HFLL…EWEL), and 142 to 156 (WISV…AAAA). Chlorophyll a is bound at residue His118. Tyr126 serves as a coordination point for pheophytin a. The [CaMn4O5] cluster site is built by Asp170 and Glu189. Residues 197 to 218 (FHQLGVAGVFGGSLFSAMHGSL) traverse the membrane as a helical segment. His198 contributes to the chlorophyll a binding site. A quinone contacts are provided by residues His215 and 264–265 (SF). A Fe cation-binding site is contributed by His215. His272 contributes to the Fe cation binding site. Residues 274 to 288 (FLGAWPVVGIWLTSM) form a helical membrane-spanning segment. [CaMn4O5] cluster is bound by residues His332, Glu333, Asp342, and Ala344. A propeptide spanning residues 345–360 (SGDSCPVALVAPSING) is cleaved from the precursor.

The protein belongs to the reaction center PufL/M/PsbA/D family. As to quaternary structure, PSII is composed of 1 copy each of membrane proteins PsbA, PsbB, PsbC, PsbD, PsbE, PsbF, PsbH, PsbI, PsbJ, PsbK, PsbL, PsbM, PsbT, PsbX, PsbY, PsbZ, Psb30/Ycf12, at least 3 peripheral proteins of the oxygen-evolving complex and a large number of cofactors. It forms dimeric complexes. The D1/D2 heterodimer binds P680, chlorophylls that are the primary electron donor of PSII, and subsequent electron acceptors. It shares a non-heme iron and each subunit binds pheophytin, quinone, additional chlorophylls, carotenoids and lipids. D1 provides most of the ligands for the Mn4-Ca-O5 cluster of the oxygen-evolving complex (OEC). There is also a Cl(-1) ion associated with D1 and D2, which is required for oxygen evolution. The PSII complex binds additional chlorophylls, carotenoids and specific lipids. serves as cofactor. Post-translationally, tyr-161 forms a radical intermediate that is referred to as redox-active TyrZ, YZ or Y-Z. C-terminally processed by CTPA; processing is essential to allow assembly of the oxygen-evolving complex and thus photosynthetic growth.

The protein resides in the plastid. It is found in the chloroplast thylakoid membrane. The enzyme catalyses 2 a plastoquinone + 4 hnu + 2 H2O = 2 a plastoquinol + O2. Its function is as follows. Photosystem II (PSII) is a light-driven water:plastoquinone oxidoreductase that uses light energy to abstract electrons from H(2)O, generating O(2) and a proton gradient subsequently used for ATP formation. It consists of a core antenna complex that captures photons, and an electron transfer chain that converts photonic excitation into a charge separation. The D1/D2 (PsbA/PsbD) reaction center heterodimer binds P680, the primary electron donor of PSII as well as several subsequent electron acceptors. This Palmaria palmata (Dulse) protein is Photosystem II protein D1.